The primary structure comprises 406 residues: Argininosuccinate synthase (406 aa).

ATP-binding positions include 11-19 (AYSGGLDTS) and Ala38. Positions 91 and 96 each coordinate L-citrulline. An ATP-binding site is contributed by Gly121. Thr123, Asn127, and Asp128 together coordinate L-aspartate. Asn127 serves as a coordination point for L-citrulline. 5 residues coordinate L-citrulline: Arg131, Ser181, Ser190, Glu266, and Tyr278.

It belongs to the argininosuccinate synthase family. Type 1 subfamily. In terms of assembly, homotetramer.

It localises to the cytoplasm. It carries out the reaction L-citrulline + L-aspartate + ATP = 2-(N(omega)-L-arginino)succinate + AMP + diphosphate + H(+). It functions in the pathway amino-acid biosynthesis; L-arginine biosynthesis; L-arginine from L-ornithine and carbamoyl phosphate: step 2/3. The polypeptide is Argininosuccinate synthase (Campylobacter curvus (strain 525.92)).